Consider the following 155-residue polypeptide: Small ribosomal subunit protein uS7cz/uS7cy (155 aa).

Belongs to the universal ribosomal protein uS7 family. In terms of assembly, part of the 30S ribosomal subunit.

It is found in the plastid. Its subcellular location is the chloroplast. Its function is as follows. One of the primary rRNA binding proteins, it binds directly to 16S rRNA where it nucleates assembly of the head domain of the 30S subunit. The sequence is that of Small ribosomal subunit protein uS7cz/uS7cy (rps7-A) from Cucumis sativus (Cucumber).